We begin with the raw amino-acid sequence, 129 residues long: Small ribosomal subunit protein uS11 (129 aa).

Belongs to the universal ribosomal protein uS11 family. In terms of assembly, part of the 30S ribosomal subunit. Interacts with proteins S7 and S18. Binds to IF-3.

Its function is as follows. Located on the platform of the 30S subunit, it bridges several disparate RNA helices of the 16S rRNA. Forms part of the Shine-Dalgarno cleft in the 70S ribosome. The chain is Small ribosomal subunit protein uS11 from Roseobacter denitrificans (strain ATCC 33942 / OCh 114) (Erythrobacter sp. (strain OCh 114)).